A 369-amino-acid chain; its full sequence is uncharacterized protein (369 aa).

It belongs to the Gfo/Idh/MocA family.

This is an uncharacterized protein from Schizosaccharomyces pombe (strain 972 / ATCC 24843) (Fission yeast).